The primary structure comprises 116 residues: Insulin (116 aa).

The signal sequence occupies residues 1–24 (MAALWLQSFSLLVLLVVSWPGSQA). Cystine bridges form between Cys-32/Cys-102, Cys-44/Cys-115, and Cys-101/Cys-106. Positions 56 to 93 (DVDQLLGFLPPKSGGAAAAGADNEVAEFAFKDQMEMMV) are cleaved as a propeptide — c peptide.

Belongs to the insulin family. As to quaternary structure, heterodimer of a B chain and an A chain linked by two disulfide bonds.

It localises to the secreted. Insulin decreases blood glucose concentration. It increases cell permeability to monosaccharides, amino acids and fatty acids. It accelerates glycolysis, the pentose phosphate cycle, and glycogen synthesis in liver. In Lophius americanus (American angler), this protein is Insulin (ins).